Consider the following 343-residue polypeptide: tRNA-specific 2-thiouridylase MnmA (343 aa).

ATP is bound by residues 7 to 14 (ALSGGVDS) and Met-33. The Nucleophile role is filled by Cys-87. Cys-87 and Cys-184 are oxidised to a cystine. ATP is bound at residue Gly-111. Positions 135–137 (KDQ) are interaction with tRNA. Cys-184 functions as the Cysteine persulfide intermediate in the catalytic mechanism. The segment at 289-290 (RY) is interaction with tRNA.

This sequence belongs to the MnmA/TRMU family.

It localises to the cytoplasm. It catalyses the reaction S-sulfanyl-L-cysteinyl-[protein] + uridine(34) in tRNA + AH2 + ATP = 2-thiouridine(34) in tRNA + L-cysteinyl-[protein] + A + AMP + diphosphate + H(+). Functionally, catalyzes the 2-thiolation of uridine at the wobble position (U34) of tRNA, leading to the formation of s(2)U34. In Desulforudis audaxviator (strain MP104C), this protein is tRNA-specific 2-thiouridylase MnmA.